The following is a 1391-amino-acid chain: ESX-5 secretion system protein EccC5 (1391 aa).

A run of 2 helical transmembrane segments spans residues 38–58 (WLIVVGVVVVGLLGGMVAMVF) and 65–85 (FGGIGSIFPLFMMVGIMMMMF). 3 consecutive FtsK domains span residues 476–678 (GELL…GAAQ), 858–1052 (QPPW…EDAK), and 1161–1354 (LAPV…DPDE). ATP is bound by residues 499–506 (GTTGSGKS), 876–883 (GAGGSGKT), and 1178–1185 (GRRECGRT).

Part of the ESX-5 / type VII secretion system (T7SS), which is composed of cytosolic and membrane components. The ESX-5 membrane complex is composed of EccB5, EccC5, EccD5 and EccE5.

The protein resides in the cell inner membrane. Its function is as follows. Part of the ESX-5 specialized secretion system, which is responsible for the secretion of EsxN and a number of PE_PGRS and PPE proteins, including PPE41. This is ESX-5 secretion system protein EccC5 from Mycobacterium tuberculosis (strain CDC 1551 / Oshkosh).